Reading from the N-terminus, the 336-residue chain is Tetraacyldisaccharide 4'-kinase (336 aa).

60 to 67 lines the ATP pocket; it reads TVGGTGKT.

Belongs to the LpxK family.

The catalysed reaction is a lipid A disaccharide + ATP = a lipid IVA + ADP + H(+). The protein operates within glycolipid biosynthesis; lipid IV(A) biosynthesis; lipid IV(A) from (3R)-3-hydroxytetradecanoyl-[acyl-carrier-protein] and UDP-N-acetyl-alpha-D-glucosamine: step 6/6. Its function is as follows. Transfers the gamma-phosphate of ATP to the 4'-position of a tetraacyldisaccharide 1-phosphate intermediate (termed DS-1-P) to form tetraacyldisaccharide 1,4'-bis-phosphate (lipid IVA). The sequence is that of Tetraacyldisaccharide 4'-kinase from Pseudomonas fluorescens (strain ATCC BAA-477 / NRRL B-23932 / Pf-5).